The following is a 450-amino-acid chain: tRNA modification GTPase MnmE (450 aa).

R25, E86, and R126 together coordinate (6S)-5-formyl-5,6,7,8-tetrahydrofolate. The TrmE-type G domain maps to 221–373 (GLRVALVGRP…LVQALLERCG (153 aa)). K(+) is bound at residue N231. GTP is bound by residues 231-236 (NVGKSS), 250-256 (TDLPGTT), 275-278 (DTAG), and 336-339 (NKAD). S235 is a binding site for Mg(2+). The K(+) site is built by T250, L252, and T255. Mg(2+) is bound at residue T256. Position 450 (K450) interacts with (6S)-5-formyl-5,6,7,8-tetrahydrofolate.

The protein belongs to the TRAFAC class TrmE-Era-EngA-EngB-Septin-like GTPase superfamily. TrmE GTPase family. As to quaternary structure, homodimer. Heterotetramer of two MnmE and two MnmG subunits. It depends on K(+) as a cofactor.

Its subcellular location is the cytoplasm. Its function is as follows. Exhibits a very high intrinsic GTPase hydrolysis rate. Involved in the addition of a carboxymethylaminomethyl (cmnm) group at the wobble position (U34) of certain tRNAs, forming tRNA-cmnm(5)s(2)U34. This is tRNA modification GTPase MnmE from Synechococcus sp. (strain CC9605).